The following is a 1365-amino-acid chain: ATP-dependent RNA helicase DHX29 (1365 aa).

Positions 1 to 10 (MGGKNKKHKA) are enriched in basic residues. Disordered regions lie at residues 1 to 74 (MGGK…NDSG), 174 to 222 (SQEF…EETT), and 235 to 257 (AEQQDEEEKGEGSKGLEEEEKFD). 2 stretches are compositionally biased toward low complexity: residues 11 to 36 (PGAAAMRAAVSASRARSAEAGAVGEA) and 43 to 53 (ARPAPAVPTGA). 3 positions are modified to phosphoserine: serine 69, serine 190, and serine 198. Residues 187 to 203 (KFQSVQIQATLSPPQQT) show a composition bias toward polar residues. Over residues 206–222 (KRQEEDPKIKPKKEETT) the composition is skewed to basic and acidic residues. Positions 281–308 (LEKNKQGQKEAQEKIRKFQREMETLEDH) form a coiled coil. Positions 500-524 (QQQQQQQQRPESEKGGSEDPEESWE) are disordered. Residues 581–754 (VETLKRHRVV…FTHCPILRIS (174 aa)) enclose the Helicase ATP-binding domain. Position 594 to 601 (594 to 601 (GETGSGKS)) interacts with ATP. The short motif at 701 to 704 (DEVH) is the DEAH box element. A Helicase C-terminal domain is found at 848–1025 (LILELLVYLD…ELCLHIMKCD (178 aa)).

The protein belongs to the DEAD box helicase family. DEAH subfamily. Part of the 43S pre-initiation complex (PIC) that contains at least Met-tRNA, EIF1, EIF1A (EIF1AX or EIF1AY), EIF2S1, EIF2S2, EIF2S3, EIF3A, EIF3B, EIF3C, EIF3D, EIF3E, EIF3F, EIF3G, EIF3H, EIF3I, EIF3J, EIF3K, EIF3L, EIF3M, DHX29 and the 40S ribosomal subunit.

The protein localises to the cytoplasm. The catalysed reaction is ATP + H2O = ADP + phosphate + H(+). In terms of biological role, ATP-binding RNA helicase involved in translation initiation. Part of the 43S pre-initiation complex that is required for efficient initiation on mRNAs of higher eukaryotes with structured 5'-UTRs by promoting efficient NTPase-dependent 48S complex formation. Specifically binds to the 40S ribosome near the mRNA entrance. Does not possess a processive helicase activity. The sequence is that of ATP-dependent RNA helicase DHX29 from Mus musculus (Mouse).